We begin with the raw amino-acid sequence, 197 residues long: Phosphoheptose isomerase (197 aa).

An SIS domain is found at 34–196 (MVQCLLGGNK…DRTLFPQDEQ (163 aa)). 49–51 (NGG) serves as a coordination point for substrate. Zn(2+)-binding residues include histidine 58 and glutamate 62. Substrate contacts are provided by residues glutamate 62, 91–92 (ND), 117–119 (STS), serine 122, and glutamine 172. 2 residues coordinate Zn(2+): glutamine 172 and histidine 180.

The protein belongs to the SIS family. GmhA subfamily. Homotetramer. Requires Zn(2+) as cofactor.

It localises to the cytoplasm. It catalyses the reaction 2 D-sedoheptulose 7-phosphate = D-glycero-alpha-D-manno-heptose 7-phosphate + D-glycero-beta-D-manno-heptose 7-phosphate. Its pathway is carbohydrate biosynthesis; D-glycero-D-manno-heptose 7-phosphate biosynthesis; D-glycero-alpha-D-manno-heptose 7-phosphate and D-glycero-beta-D-manno-heptose 7-phosphate from sedoheptulose 7-phosphate: step 1/1. Its function is as follows. Catalyzes the isomerization of sedoheptulose 7-phosphate in D-glycero-D-manno-heptose 7-phosphate. This chain is Phosphoheptose isomerase, found in Shewanella piezotolerans (strain WP3 / JCM 13877).